The following is a 109-amino-acid chain: B melanoma antigen 3 (109 aa).

The first 17 residues, 1–17 (MAAGVVFLALSAQLLQA), serve as a signal peptide directing secretion.

The protein belongs to the BAGE family. As to expression, not expressed in normal tissues except in testis. Expressed in melanoma, bladder and lung carcinomas.

Its subcellular location is the secreted. Its function is as follows. Unknown. Candidate gene encoding tumor antigens. The chain is B melanoma antigen 3 (BAGE3) from Homo sapiens (Human).